An 837-amino-acid polypeptide reads, in one-letter code: Periplasmic nitrate reductase (837 aa).

The segment at residues 1-33 (MTTPKLDRRQVLKLEAAAMAALAGGIAMPAAAA) is a signal peptide (tat-type signal). In terms of domain architecture, 4Fe-4S Mo/W bis-MGD-type spans 44–100 (LKWDKAACRFCGTGCSVMVATKENRVVATHGDTKSEVNRGLNCVKGYFLSKIMYGHD). [4Fe-4S] cluster-binding residues include Cys51, Cys54, Cys58, and Cys86. Mo-bis(molybdopterin guanine dinucleotide) is bound by residues Lys88, Gln155, Asn180, Cys184, 217–224 (WGSNMAEM), 248–252 (STFEH), 267–269 (QTD), Met378, Gln382, Asn488, 514–515 (SD), Lys537, Asp564, and 724–733 (TGRVLEHWHS). Residue Trp800 coordinates substrate. Mo-bis(molybdopterin guanine dinucleotide)-binding residues include Asn808 and Lys825.

Belongs to the prokaryotic molybdopterin-containing oxidoreductase family. NasA/NapA/NarB subfamily. As to quaternary structure, component of the periplasmic nitrate reductase NapAB complex composed of NapA and NapB. It depends on [4Fe-4S] cluster as a cofactor. The cofactor is Mo-bis(molybdopterin guanine dinucleotide). Post-translationally, predicted to be exported by the Tat system. The position of the signal peptide cleavage has not been experimentally proven.

It is found in the periplasm. The catalysed reaction is 2 Fe(II)-[cytochrome] + nitrate + 2 H(+) = 2 Fe(III)-[cytochrome] + nitrite + H2O. Catalytic subunit of the periplasmic nitrate reductase complex NapAB. Receives electrons from NapB and catalyzes the reduction of nitrate to nitrite. In Rhodopseudomonas palustris (strain BisB18), this protein is Periplasmic nitrate reductase.